We begin with the raw amino-acid sequence, 233 residues long: LOB domain-containing protein 40 (233 aa).

The LOB domain occupies 3–109 (MSCNGCRVLR…VEAVMRGSPV (107 aa)). A compositionally biased stretch (basic and acidic residues) spans 143–160 (KRRSRGACKEERNVRSLS). Residues 143-183 (KRRSRGACKEERNVRSLSHESSLSHESPVSSEETTTEEPKT) are disordered. Positions 161–175 (HESSLSHESPVSSEE) are enriched in low complexity.

This sequence belongs to the LOB domain-containing protein family. In terms of tissue distribution, expressed in roots and flowers.

The chain is LOB domain-containing protein 40 (LBD40) from Arabidopsis thaliana (Mouse-ear cress).